The chain runs to 45 residues: Large ribosomal subunit protein bL34 (45 aa).

Belongs to the bacterial ribosomal protein bL34 family.

This Arthrobacter sp. (strain FB24) protein is Large ribosomal subunit protein bL34.